A 553-amino-acid chain; its full sequence is Dihydrolipoyllysine-residue acetyltransferase component of pyruvate dehydrogenase complex (553 aa).

The region spanning 2 to 77 (AFSVQMPALG…EVGGELAVIG (76 aa)) is the Lipoyl-binding 1 domain. Lys-43 is modified (N6-lipoyllysine). The interval 81–125 (DAGEAAAPAPEKVPAAQPESKPAPEPPPVQPTSGAPAGGDAKPVL) is disordered. Over residues 84–100 (EAAAPAPEKVPAAQPES) the composition is skewed to low complexity. Pro residues predominate over residues 101-110 (KPAPEPPPVQ). Residues 121–196 (AKPVLMPELG…PVGGELARIG (76 aa)) enclose the Lipoyl-binding 2 domain. Lys-162 is subject to N6-lipoyllysine. 2 disordered regions span residues 204–238 (APAPKPAPKPVPEPAPTPKAEPAPSPPAAQPAGAA) and 278–321 (AAAE…TQKA). Pro residues predominate over residues 206-232 (APKPAPKPVPEPAPTPKAEPAPSPPAA). The region spanning 243 to 280 (YVTPLVRKLASENNIDLAGVTGTGVGGRIRKQDVLAAA) is the Peripheral subunit-binding (PSBD) domain. A compositionally biased stretch (low complexity) spans 288–300 (APAPAAQAAAAPA). Active-site residues include His-523 and Asp-527.

The protein belongs to the 2-oxoacid dehydrogenase family. As to quaternary structure, forms a 24-polypeptide structural core with octahedral symmetry. Part of the PDH complex, consisting of multiple copies of AceE (E1), DlaT (E2) and Lpd (E3). (R)-lipoate serves as cofactor.

It catalyses the reaction N(6)-[(R)-dihydrolipoyl]-L-lysyl-[protein] + acetyl-CoA = N(6)-[(R)-S(8)-acetyldihydrolipoyl]-L-lysyl-[protein] + CoA. Its function is as follows. Component of the pyruvate dehydrogenase (PDH) complex, that catalyzes the overall conversion of pyruvate to acetyl-CoA and CO(2). This chain is Dihydrolipoyllysine-residue acetyltransferase component of pyruvate dehydrogenase complex (dlaT), found in Mycobacterium bovis (strain ATCC BAA-935 / AF2122/97).